Consider the following 588-residue polypeptide: Phenol 2-monooxygenase fsqG (588 aa).

FAD is bound by residues 9-38, 17-18, 37-39, 45-50, Y232, 289-299, D299, and 309-313; these read DVLI…LIDW, PA, DWK, TGRADG, ARHNRIFLAGD, and GQGMN. Substrate contacts are provided by D49 and Y232.

Belongs to the PheA/TfdB FAD monooxygenase family. In terms of assembly, homodimer. FAD is required as a cofactor.

It participates in secondary metabolite biosynthesis. Its function is as follows. Phenol 2-monooxygenase; part of the gene cluster that mediates the biosynthesis of the isoquinoline alkaloids fumisoquin A, fumisoquin B and fumisoquin C; as well as small amounts of fumipyrrole as a shunt metabolite. The products of the cluster lead to a brown coloration and are important for growth and conidiation. The nonribosomal peptide synthetase-like protein fsqF, which lacks a canonical condensation domain, is required for addition of a serine-derived dehydroalanine moiety to activated tyrosine but is not essential for the subsequent steps leading to isoquinoline formation. A different enzyme, most likely the ATP-grasp enzyme fsqD, is responsible for activation of tyrosine. Three additional enzymes encoded by the fsq cluster, the N-methyltransferase fsqC, the phenol 2-monooxygenase fsqG and the FAD-dependent oxidase fsqB, catalyze the formation of the isoquinoline ring system in the fumisoquins. FsqB converts the fspF thiolation domain-bound (2S,4S,5S)-2-amino-6-(3,4-dihydroxyphenyl)-4-hydroxy-5-(methylamino)hexanoyl into isoquinoline. The cyclization most likely proceeds via a two-step mechanism, beginning with FAD-dependent oxidation of the methyl group to an iminium species followed by electrophilic attack on the deprotonated phenol. The chain is Phenol 2-monooxygenase fsqG from Aspergillus fumigatus (strain ATCC MYA-4609 / CBS 101355 / FGSC A1100 / Af293) (Neosartorya fumigata).